A 594-amino-acid chain; its full sequence is uncharacterized protein (594 aa).

Functionally, the presence of the two linear plasmids, termed pGKL1 and pGKL2, in strains of Kluyveromyces lactis confers the killer phenotype to the host cell, by promoting the secretion of a toxin able to inhibit the growth of sensitive strains. This is an uncharacterized protein from Kluyveromyces lactis (strain ATCC 8585 / CBS 2359 / DSM 70799 / NBRC 1267 / NRRL Y-1140 / WM37) (Yeast).